A 631-amino-acid polypeptide reads, in one-letter code: Guanylate-binding protein 4 (631 aa).

The 251-residue stretch at 33 to 283 (SQPVVVVAIV…FASYIFTYAK (251 aa)) folds into the GB1/RHD3-type G domain. GTP contacts are provided by residues 43 to 50 (GWSHTGKS) and 103 to 107 (DTEGL). Residues 492–592 (IAEKHTKKEA…GHNIKEMKQN (101 aa)) are a coiled coil.

The protein belongs to the TRAFAC class dynamin-like GTPase superfamily. GB1/RHD3 GTPase family. GB1 subfamily. In terms of assembly, heterodimer with other family members, including GBP1, GBP2 and GBP5. Dimerization regulates subcellular location. Interacts with IRF7; preventing interaction between TRAF6 and IRF7, resulting in impaired TRAF6-mediated IRF7 ubiquitination. Mainly expressed in organs of the immune system, such as spleen and lymph nodes.

The protein resides in the golgi apparatus membrane. Its subcellular location is the cytoplasm. The protein localises to the nucleus. It is found in the perinuclear region. It catalyses the reaction GTP + H2O = GDP + phosphate + H(+). In terms of biological role, interferon (IFN)-inducible GTPase that plays important roles in innate immunity against a diverse range of bacterial, viral and protozoan pathogens. Negatively regulates the antiviral response by inhibiting activation of IRF7 transcription factor. This Mus musculus (Mouse) protein is Guanylate-binding protein 4.